The chain runs to 331 residues: MEKPEWSELPGDLINLTANRFSSISDVLRVRSICKPWRSAAATPKSFQCNLPSSNKMIETVLSPTTFFRVTGPSSCSYKGWLIRTKQVSESSKINLLSPFFRQLLTPSQQTLDLLKFEVSEIRQSYEIHIFDKYLIQGVIGKEGPSHILSRVVFLDNLIFAVGQDDKIWCCKSGEESSRIWTKIKNQVEDFLDIILHKGQVYALDLTGAIWWISLSPLSLLQFTPSIPMDYDGYDSCNKRLVEYCGDLCIIHQLRLKKAYIRRSQRTVGFKVYKMDEYVAKWVEVRSLGDKALIVARDSCFTVVASEYHGCLNNSIYFVDNVRKSVIRMKL.

One can recognise an F-box domain in the interval 4-52; that stretch reads PEWSELPGDLINLTANRFSSISDVLRVRSICKPWRSAAATPKSFQCNLP.

The protein is F-box protein At2g26160 of Arabidopsis thaliana (Mouse-ear cress).